A 142-amino-acid polypeptide reads, in one-letter code: 3-hydroxyacyl-[acyl-carrier-protein] dehydratase FabZ (142 aa).

The active site involves His47.

Belongs to the thioester dehydratase family. FabZ subfamily.

It is found in the cytoplasm. The enzyme catalyses a (3R)-hydroxyacyl-[ACP] = a (2E)-enoyl-[ACP] + H2O. Its function is as follows. Involved in unsaturated fatty acids biosynthesis. Catalyzes the dehydration of short chain beta-hydroxyacyl-ACPs and long chain saturated and unsaturated beta-hydroxyacyl-ACPs. In Thermoanaerobacter sp. (strain X514), this protein is 3-hydroxyacyl-[acyl-carrier-protein] dehydratase FabZ.